We begin with the raw amino-acid sequence, 397 residues long: Glutamyl-tRNA reductase (397 aa).

Residues 47–50, S98, 103–105, and Q109 each bind substrate; these read TCGR and ETD. Catalysis depends on C48, which acts as the Nucleophile. 177-182 is an NADP(+) binding site; it reads GAGAVG.

The protein belongs to the glutamyl-tRNA reductase family. Homodimer.

The catalysed reaction is (S)-4-amino-5-oxopentanoate + tRNA(Glu) + NADP(+) = L-glutamyl-tRNA(Glu) + NADPH + H(+). Its pathway is porphyrin-containing compound metabolism; protoporphyrin-IX biosynthesis; 5-aminolevulinate from L-glutamyl-tRNA(Glu): step 1/2. Catalyzes the NADPH-dependent reduction of glutamyl-tRNA(Glu) to glutamate 1-semialdehyde (GSA). In Pyrobaculum aerophilum (strain ATCC 51768 / DSM 7523 / JCM 9630 / CIP 104966 / NBRC 100827 / IM2), this protein is Glutamyl-tRNA reductase.